Consider the following 238-residue polypeptide: Tetraspanin-4 (238 aa).

Over 1–13 (MARGCLQGVKYLM) the chain is Cytoplasmic. A helical transmembrane segment spans residues 14–34 (FAFNLLFWLGGCGVLGVGIWL). The Extracellular portion of the chain corresponds to 35–55 (AATQGNFATLSSSFPSLSAAN). The helical transmembrane segment at 56 to 76 (LLIVTGTFVMAIGFVGCIGAL) threads the bilayer. Residues 77 to 85 (KENKCLLLT) are Cytoplasmic-facing. A helical transmembrane segment spans residues 86 to 106 (FFVLLLLVFLLEATIAVLFFA). Residues 107 to 201 (YSDKIDSYAQ…ETVKAWLQEN (95 aa)) lie on the Extracellular side of the membrane. Asn-152 and Asn-161 each carry an N-linked (GlcNAc...) asparagine glycan. A helical transmembrane segment spans residues 202–222 (LLAVGIFGLCTALVQILGLTF). The Cytoplasmic segment spans residues 223-238 (AMTMYCQVVKADTYCA).

The protein belongs to the tetraspanin (TM4SF) family. Forms a complex with integrins.

The protein resides in the membrane. The sequence is that of Tetraspanin-4 (Tspan4) from Mus musculus (Mouse).